The primary structure comprises 736 residues: 1,4-alpha-glucan branching enzyme GlgB (736 aa).

The Nucleophile role is filled by Asp-415. Glu-468 functions as the Proton donor in the catalytic mechanism.

The protein belongs to the glycosyl hydrolase 13 family. GlgB subfamily. As to quaternary structure, monomer.

It carries out the reaction Transfers a segment of a (1-&gt;4)-alpha-D-glucan chain to a primary hydroxy group in a similar glucan chain.. It functions in the pathway glycan biosynthesis; glycogen biosynthesis. Catalyzes the formation of the alpha-1,6-glucosidic linkages in glycogen by scission of a 1,4-alpha-linked oligosaccharide from growing alpha-1,4-glucan chains and the subsequent attachment of the oligosaccharide to the alpha-1,6 position. The sequence is that of 1,4-alpha-glucan branching enzyme GlgB from Rhodopirellula baltica (strain DSM 10527 / NCIMB 13988 / SH1).